The sequence spans 252 residues: Probable transcriptional regulatory protein Haur_3030 (252 aa).

It belongs to the TACO1 family.

It is found in the cytoplasm. This Herpetosiphon aurantiacus (strain ATCC 23779 / DSM 785 / 114-95) protein is Probable transcriptional regulatory protein Haur_3030.